We begin with the raw amino-acid sequence, 254 residues long: Cytochrome c oxidase subunit 2 (254 aa).

Residues 12–38 (DAPEPWQICYQDSATKIMSGIDKLTGE) are Mitochondrial intermembrane-facing. A helical membrane pass occupies residues 39-59 (IFYYETLLLIIVGWVLISAII). Topologically, residues 60–73 (KYTKTELSYKYFNH) are mitochondrial matrix. A helical membrane pass occupies residues 74–94 (GTLIEILWTCSPAFILIAISF). Over 95 to 248 (PSFKLLYLMD…KYLEWLNIHL (154 aa)) the chain is Mitochondrial intermembrane. H182, C217, E219, C221, H225, and M228 together coordinate Cu cation. E219 serves as a coordination point for Mg(2+).

This sequence belongs to the cytochrome c oxidase subunit 2 family. Component of the cytochrome c oxidase (complex IV, CIV), a multisubunit enzyme composed of a catalytic core of 3 subunits and several supernumerary subunits. The complex exists as a monomer or a dimer and forms supercomplexes (SCs) in the inner mitochondrial membrane with ubiquinol-cytochrome c oxidoreductase (cytochrome b-c1 complex, complex III, CIII). Cu cation is required as a cofactor.

It localises to the mitochondrion inner membrane. It catalyses the reaction 4 Fe(II)-[cytochrome c] + O2 + 8 H(+)(in) = 4 Fe(III)-[cytochrome c] + 2 H2O + 4 H(+)(out). Functionally, component of the cytochrome c oxidase, the last enzyme in the mitochondrial electron transport chain which drives oxidative phosphorylation. The respiratory chain contains 3 multisubunit complexes succinate dehydrogenase (complex II, CII), ubiquinol-cytochrome c oxidoreductase (cytochrome b-c1 complex, complex III, CIII) and cytochrome c oxidase (complex IV, CIV), that cooperate to transfer electrons derived from NADH and succinate to molecular oxygen, creating an electrochemical gradient over the inner membrane that drives transmembrane transport and the ATP synthase. Cytochrome c oxidase is the component of the respiratory chain that catalyzes the reduction of oxygen to water. Electrons originating from reduced cytochrome c in the intermembrane space (IMS) are transferred via the dinuclear copper A center (CU(A)) of subunit 2 and heme A of subunit 1 to the active site in subunit 1, a binuclear center (BNC) formed by heme A3 and copper B (CU(B)). The BNC reduces molecular oxygen to 2 water molecules using 4 electrons from cytochrome c in the IMS and 4 protons from the mitochondrial matrix. This chain is Cytochrome c oxidase subunit 2, found in Zancudomyces culisetae (Gut fungus).